The sequence spans 183 residues: Protein GrpE (183 aa).

A compositionally biased stretch (basic and acidic residues) spans M1–K14. The tract at residues M1 to E20 is disordered.

It belongs to the GrpE family. Homodimer.

It is found in the cytoplasm. In terms of biological role, participates actively in the response to hyperosmotic and heat shock by preventing the aggregation of stress-denatured proteins, in association with DnaK and GrpE. It is the nucleotide exchange factor for DnaK and may function as a thermosensor. Unfolded proteins bind initially to DnaJ; upon interaction with the DnaJ-bound protein, DnaK hydrolyzes its bound ATP, resulting in the formation of a stable complex. GrpE releases ADP from DnaK; ATP binding to DnaK triggers the release of the substrate protein, thus completing the reaction cycle. Several rounds of ATP-dependent interactions between DnaJ, DnaK and GrpE are required for fully efficient folding. This chain is Protein GrpE, found in Vibrio vulnificus (strain CMCP6).